The chain runs to 427 residues: UPF0761 membrane protein Plut_1323 (427 aa).

6 helical membrane-spanning segments follow: residues 51–71, 105–125, 147–167, 188–208, 221–241, and 251–271; these read LLSIVPLLAVVLSILNVFAVF, TFTMPIFGALFLFIVALVLIS, FTLYWTVLTLGPVLLATSLAA, LLSLLPSTITVLALLLLYLLV, GALVATLLFEVSKRWFAFYVA, and GALSVIPMLFFWIYLGWVVVL.

The protein belongs to the UPF0761 family.

The protein resides in the cell inner membrane. The protein is UPF0761 membrane protein Plut_1323 of Chlorobium luteolum (strain DSM 273 / BCRC 81028 / 2530) (Pelodictyon luteolum).